The following is a 106-amino-acid chain: Iron-sulfur cluster assembly protein CyaY (106 aa).

Belongs to the frataxin family.

In terms of biological role, involved in iron-sulfur (Fe-S) cluster assembly. May act as a regulator of Fe-S biogenesis. The chain is Iron-sulfur cluster assembly protein CyaY from Pectobacterium carotovorum subsp. carotovorum (strain PC1).